A 125-amino-acid polypeptide reads, in one-letter code: uncharacterized protein (125 aa).

This is an uncharacterized protein from Bacillus subtilis (strain 168).